Reading from the N-terminus, the 173-residue chain is MVQQQQQSQQRMMELHERNDREKLARKTEKEREEERRKQEDDKILQLEKKLEEFQENARFIGDLASNFQTKYQDALNGRIYTLVRGLQDLDRMKGTFSDKKVPLDLLPYLDDGKNPCLYSKHCMEKTLEKNKAVNGKIEIYKKFRAHLMKEFSEEMPDLVMYYRSIREDLDLS.

The segment covering 1–10 (MVQQQQQSQQ) has biased composition (low complexity). The disordered stretch occupies residues 1–42 (MVQQQQQSQQRMMELHERNDREKLARKTEKEREEERRKQEDD). The segment covering 13–42 (MELHERNDREKLARKTEKEREEERRKQEDD) has biased composition (basic and acidic residues).

This sequence belongs to the Mediator complex subunit 10 family. Component of the Mediator complex.

The protein localises to the nucleus. Its function is as follows. Component of the Mediator complex, a coactivator involved in the regulated transcription of nearly all RNA polymerase II-dependent genes. Mediator functions as a bridge to convey information from gene-specific regulatory proteins to the basal RNA polymerase II transcription machinery. Mediator is recruited to promoters by direct interactions with regulatory proteins and serves as a scaffold for the assembly of a functional preinitiation complex with RNA polymerase II and the general transcription factors. Required for germ cell development and for transcriptional activation of certain stage-specific inducible promoters. The sequence is that of Mediator of RNA polymerase II transcription subunit 10 (mdt-10) from Caenorhabditis elegans.